Here is a 131-residue protein sequence, read N- to C-terminus: MVNDIIADSLTRIRNAAMRRLDYTTLYYAKIVVSILEVFLAKGFIESYKVIDKDGKQSINVVLKYDEKGRSVISEIKRISKSGRRVYKGRDELKRFKNGYGTIVVSTSKGVIGNEEAYKANVGGEALCSIW.

This sequence belongs to the universal ribosomal protein uS8 family. In terms of assembly, part of the 30S ribosomal subunit. Contacts proteins S5 and S12.

One of the primary rRNA binding proteins, it binds directly to 16S rRNA central domain where it helps coordinate assembly of the platform of the 30S subunit. This Wolinella succinogenes (strain ATCC 29543 / DSM 1740 / CCUG 13145 / JCM 31913 / LMG 7466 / NCTC 11488 / FDC 602W) (Vibrio succinogenes) protein is Small ribosomal subunit protein uS8.